We begin with the raw amino-acid sequence, 349 residues long: Homeobox-leucine zipper protein HOX7 (349 aa).

The interval 42 to 186 (RATRRDEQDD…PKQKSDLANR (145 aa)) is disordered. 2 stretches are compositionally biased toward polar residues: residues 89–99 (SAETGSANSEM) and 121–135 (SSPS…RQQV). A DNA-binding region (homeobox) is located at residues 150 to 209 (GARKKLRLSKEQSSFLEDSFKEHSTLTPKQKSDLANRLNLRPRQVEVWFQNRRARTKLKQ). The span at 167 to 183 (DSFKEHSTLTPKQKSDL) shows a compositional bias: basic and acidic residues. Residues 208–252 (KQTEVDCEHLKRCCERLTRENRRLQREVAELRGTLRTTTSSYPPL) form a leucine-zipper region.

It belongs to the HD-ZIP homeobox family. Class II subfamily. In terms of assembly, homodimer. May form a heterodimer with HOX1, HOX2 or HOX3. In terms of tissue distribution, expressed in seedlings, roots, leaves, nodes, internodes, flowers and embryo.

It is found in the nucleus. Probable transcription factor that binds to the DNA sequence 5'-CAAT[GC]ATTG-3'. The chain is Homeobox-leucine zipper protein HOX7 (HOX7) from Oryza sativa subsp. japonica (Rice).